The following is a 334-amino-acid chain: Mevalonate kinase (334 aa).

110–120 (PVGAGLGSSAA) lines the ATP pocket. Catalysis depends on aspartate 161, which acts as the Proton acceptor.

Belongs to the GHMP kinase family. Mevalonate kinase subfamily. In terms of assembly, homodimer. It depends on Mg(2+) as a cofactor.

Its subcellular location is the cytoplasm. It catalyses the reaction (R)-mevalonate + ATP = (R)-5-phosphomevalonate + ADP + H(+). Its pathway is isoprenoid biosynthesis; isopentenyl diphosphate biosynthesis via mevalonate pathway; isopentenyl diphosphate from (R)-mevalonate: step 1/3. In terms of biological role, catalyzes the phosphorylation of (R)-mevalonate (MVA) to (R)-mevalonate 5-phosphate (MVAP). Functions in the mevalonate (MVA) pathway leading to isopentenyl diphosphate (IPP), a key precursor for the biosynthesis of isoprenoid compounds such as archaeal membrane lipids. The protein is Mevalonate kinase of Pyrococcus furiosus (strain ATCC 43587 / DSM 3638 / JCM 8422 / Vc1).